A 549-amino-acid polypeptide reads, in one-letter code: MEGQWGRWRLAAAAAASSSGDQIAAAWAVVRARAVAPVLQFAVWACMAMSVMLVLEVAYMSLVSLVAVKLLRRVPERRYKWEPITTGSGGVGGGDGEDEEAATGGREAAAFPMVLVQIPMYNEKEVYKLSIGAACALTWPPDRIIIQVLDDSTDPAIKDLVELECKDWARKEINIKYEIRDNRKGYKAGALKKGMEHIYTQQCDFVAIFDADFQPESDFLLKTIPFLVHNPKIGLVQTRWEFVNYDVCLMTRIQKMSLDYHFKVEQESGSSMHSFFGFNGTAGVWRVSAINEAGGWKDRTTVEDMDLAVRASLKGWQFLYVGDIRVKSELPSTFKAYRHQQHRWTCGAANLFRKMATEIAKNKGVSVWKKLHLLYSFFFVRRVVAPILTFLFYCVVIPLSVMVPEVSIPVWGMVYIPTAITIMNAIRNPGSIHLMPFWILFENVMAMHRMRAALTGLLETMNVNQWVVTEKVGDHVKDKLEVPLLEPLKPTDCVERIYIPELMVAFYLLVCASYDLVLGAKHYYLYIYLQAFAFIALGFGFAGTSTPCS.

Residues 35 to 55 (VAPVLQFAVWACMAMSVMLVL) traverse the membrane as a helical segment. Aspartate 151 is an active-site residue. 2 residues coordinate substrate: aspartate 210 and aspartate 212. Aspartate 304 is a catalytic residue. 4 helical membrane passes run 383-403 (VVAP…SVMV), 406-426 (VSIP…MNAI), 497-517 (IYIP…YDLV), and 523-543 (YYLY…GFAG).

Belongs to the glycosyltransferase 2 family. Plant cellulose synthase-like A subfamily.

It is found in the golgi apparatus membrane. It catalyses the reaction GDP-mannose + (glucomannan)n = GDP + (glucomannan)n+1.. Probable mannan synthase which consists of a 4-beta-mannosyltransferase activity on mannan using GDP-mannose. The beta-1,4-mannan product is the backbone for galactomannan synthesis by galactomannan galactosyltransferase. Galactomannan is a noncellulosic polysaccharides of plant cell wall. The chain is Probable glucomannan 4-beta-mannosyltransferase 4 from Oryza sativa subsp. japonica (Rice).